Reading from the N-terminus, the 464-residue chain is JmjC domain-containing protein 1 (464 aa).

The 168-residue stretch at 182-349 (LYAKDMHLFR…QMYTALKEQY (168 aa)) folds into the JmjC domain.

In Schizosaccharomyces pombe (strain 972 / ATCC 24843) (Fission yeast), this protein is JmjC domain-containing protein 1 (jmj1).